The sequence spans 338 residues: Nicotinate-nucleotide--dimethylbenzimidazole phosphoribosyltransferase (338 aa).

The active-site Proton acceptor is the glutamate 306.

This sequence belongs to the CobT family.

It catalyses the reaction 5,6-dimethylbenzimidazole + nicotinate beta-D-ribonucleotide = alpha-ribazole 5'-phosphate + nicotinate + H(+). Its pathway is nucleoside biosynthesis; alpha-ribazole biosynthesis; alpha-ribazole from 5,6-dimethylbenzimidazole: step 1/2. In terms of biological role, catalyzes the synthesis of alpha-ribazole-5'-phosphate from nicotinate mononucleotide (NAMN) and 5,6-dimethylbenzimidazole (DMB). The sequence is that of Nicotinate-nucleotide--dimethylbenzimidazole phosphoribosyltransferase from Cereibacter sphaeroides (strain ATCC 17023 / DSM 158 / JCM 6121 / CCUG 31486 / LMG 2827 / NBRC 12203 / NCIMB 8253 / ATH 2.4.1.) (Rhodobacter sphaeroides).